The chain runs to 519 residues: 4-nitrophenol 2-monooxygenase, oxygenase component (519 aa).

It belongs to the FADH(2)-utilizing monooxygenase family. Homotetramer. 4-nitrophenol 2-monooxygenase complex consists of an oxygenase component NphA1 and a flavin reductase component NphA2. FAD is required as a cofactor.

It carries out the reaction 4-nitrophenol + NADH + O2 + H(+) = 4-nitrocatechol + NAD(+) + H2O. With respect to regulation, partially inhibited by concentrations of FAD above 10 uM and completely inhibited by concentrations above 50 uM. Functionally, utilizes the flavins supplied by NphA2 to catalyze the degradation of 4-nitrophenol (4-NP) via 4-nitrocatechol (4-NC) which is used as the sole carbon, nitrogen, and energy source. Can also degrade phenol and 4-chlorophenol as rapidly as 4-NP. The chain is 4-nitrophenol 2-monooxygenase, oxygenase component (nphA1) from Rhodococcus sp.